A 593-amino-acid polypeptide reads, in one-letter code: A-type ATP synthase subunit A (593 aa).

Gly-236–Thr-243 is a binding site for ATP.

Belongs to the ATPase alpha/beta chains family. In terms of assembly, has multiple subunits with at least A(3), B(3), C, D, E, F, H, I and proteolipid K(x).

It is found in the cell membrane. The enzyme catalyses ATP + H2O + 4 H(+)(in) = ADP + phosphate + 5 H(+)(out). Component of the A-type ATP synthase that produces ATP from ADP in the presence of a proton gradient across the membrane. The A chain is the catalytic subunit. The sequence is that of A-type ATP synthase subunit A from Pyrobaculum islandicum (strain DSM 4184 / JCM 9189 / GEO3).